An 88-amino-acid polypeptide reads, in one-letter code: Small ribosomal subunit protein uS15 (88 aa).

This sequence belongs to the universal ribosomal protein uS15 family. As to quaternary structure, part of the 30S ribosomal subunit. Forms a bridge to the 50S subunit in the 70S ribosome, contacting the 23S rRNA.

Its function is as follows. One of the primary rRNA binding proteins, it binds directly to 16S rRNA where it helps nucleate assembly of the platform of the 30S subunit by binding and bridging several RNA helices of the 16S rRNA. Forms an intersubunit bridge (bridge B4) with the 23S rRNA of the 50S subunit in the ribosome. The sequence is that of Small ribosomal subunit protein uS15 from Borrelia garinii subsp. bavariensis (strain ATCC BAA-2496 / DSM 23469 / PBi) (Borreliella bavariensis).